A 220-amino-acid chain; its full sequence is MERNTCMILALDVTEREEALKIAENVREFVDAIKVGYPLILATGLDIIRELARFAPVIADFKVADIPNTNRLICEQVFKAGADAVIVQGFTGRDSLDACIEVASKYGKDVFVVSEMSHPGGAEFLQSAAEAIAKMAVEAGAFGLVAPATRPERVKEIRKIIGDRLTIISPGVGAQGGKASDVISAGADWVIVGRSIYKAESPKEAACEIAEEIQAELRGK.

Residues D12, K34, 60–69, S117, 170–180, G193, and R194 contribute to the substrate site; these read DFKVADIPNT and PGVGAQGGKAS. K62 (proton donor) is an active-site residue.

The protein belongs to the OMP decarboxylase family. Type 1 subfamily. In terms of assembly, homodimer.

The enzyme catalyses orotidine 5'-phosphate + H(+) = UMP + CO2. The protein operates within pyrimidine metabolism; UMP biosynthesis via de novo pathway; UMP from orotate: step 2/2. Its function is as follows. Catalyzes the decarboxylation of orotidine 5'-monophosphate (OMP) to uridine 5'-monophosphate (UMP). This chain is Orotidine 5'-phosphate decarboxylase, found in Methanosarcina mazei (strain ATCC BAA-159 / DSM 3647 / Goe1 / Go1 / JCM 11833 / OCM 88) (Methanosarcina frisia).